The primary structure comprises 402 residues: MEQKPSTLDPLSEPEDTRWLDGKRKRKSSQCLVKSSMSGYIPSYLDKDEQCVVCGDKATGYHYRCITCEGCKGFFRRTIQKNLHPTYSCKYDGCCVIDKITRNQCQLCRFKKCISVGMAMDLVLDDSKRVAKRKLIEENRERRRKEEMIKSLQHRPNPSAEEWELIHVVTEAHRSTNAQGSHWKQKRKFLPEDIGQSPMASMPDGDKVDLEAFSEFTKIITPAITRVVDFAKKLPMFSELPCEDQIILLKGCCMEIMSLRAAVRYDPESETLTLSGEMAVKREQLKNGGLGVVSDAIFDLGKSLSAFNLDDTEVALLQAVLLMSSDRTGLICVEKIEKCQETYLLAFEHYINYRKHNIPHFWPKLLMKVTDLRMIRACHASRFLHMKVECPTELFPPLFLEV.

The tract at residues 1 to 22 (MEQKPSTLDPLSEPEDTRWLDG) is disordered. Residues 1–50 (MEQKPSTLDPLSEPEDTRWLDGKRKRKSSQCLVKSSMSGYIPSYLDKDEQ) form a modulating region. At Ser12 the chain carries Phosphoserine; by CK2. Ser28 carries the phosphoserine modification. The Zn(2+) site is built by Cys51, Cys54, Cys68, Cys71, Cys89, Cys95, Cys105, and Cys108. 2 consecutive NR C4-type zinc fingers follow at residues 51-71 (CVVC…CEGC) and 89-113 (CKYD…FKKC). Residues 51 to 125 (CVVCGDKATG…VGMAMDLVLD (75 aa)) constitute a DNA-binding region (nuclear receptor). The NR LBD domain maps to 161 to 402 (EEWELIHVVT…ELFPPLFLEV (242 aa)). 3,3',5-triiodo-L-thyronine contacts are provided by Arg226 and Ser275.

This sequence belongs to the nuclear hormone receptor family. NR1 subfamily. In terms of assembly, probably interacts with SFPQ.

Its subcellular location is the nucleus. Functionally, nuclear hormone receptor that can act as a repressor or activator of transcription. High affinity receptor for thyroid hormones, including triiodothyronine and thyroxine. This is Thyroid hormone receptor alpha (THRA) from Aptenodytes patagonicus (King penguin).